The chain runs to 236 residues: MNKLITLLLAVLMIISCVYSDDVEITDDEVVQATPTSDVSFSYIFPDNQDKNFAAGSVVEVLVGFTNNADKALNITHIFASLNHPQDFSVFIQNYTRGDFGIAVEKGHHATLAYRFVPSEYLEPREFGLLISLEYQDGAQNFTQTFFNSTINITEKETSFDMDSFFLILLGLGFVGGIGYIVYGKMPKQKKVRTVSKVNKNAVRVETEDETAEWLSGTSAASSKVKSVQKVVKKNK.

An N-terminal signal peptide occupies residues 1–20 (MNKLITLLLAVLMIISCVYS). At 21 to 163 (DDVEITDDEV…TEKETSFDMD (143 aa)) the chain is on the lumenal side. N-linked (GlcNAc...) asparagine glycosylation is found at Asn74, Asn94, Asn141, Asn148, and Asn152. A helical transmembrane segment spans residues 164 to 184 (SFFLILLGLGFVGGIGYIVYG). Residues 185–236 (KMPKQKKVRTVSKVNKNAVRVETEDETAEWLSGTSAASSKVKSVQKVVKKNK) lie on the Cytoplasmic side of the membrane.

It belongs to the TRAP-alpha family. As to quaternary structure, heterotrimer of TRAP-alpha, TRAP-beta and TRAP-gamma. In terms of processing, phosphorylated in its cytoplasmic tail.

The protein localises to the endoplasmic reticulum membrane. TRAP proteins are part of a complex whose function is to bind calcium to the ER membrane and thereby regulate the retention of ER resident proteins. In Dictyostelium discoideum (Social amoeba), this protein is Translocon-associated protein subunit alpha (ssr1).